The sequence spans 160 residues: MKCSVLQMSRLSWAMCLMLLMLLLLGTAQGCFIRNCPRGGKRAVDALQPTRQCMSCGPDGVGQCVGPSVCCGLGLGCLMGTPETEVCQKENESSVPCAISGRHCGMDNTGNCVADGICCVEDACSFNSLCRVDTDQEDSVSARQELLTLIRRLLVNRQYD.

The first 30 residues, 1 to 30, serve as a signal peptide directing secretion; the sequence is MKCSVLQMSRLSWAMCLMLLMLLLLGTAQG. A disulfide bridge links Cys-31 with Cys-36. Glycine amide is present on Gly-39. Positions 40-47 are excised as a propeptide; it reads GKRAVDAL. Cystine bridges form between Cys-53/Cys-97, Cys-56/Cys-70, Cys-64/Cys-87, Cys-71/Cys-77, Cys-104/Cys-118, Cys-112/Cys-130, and Cys-119/Cys-124.

This sequence belongs to the vasopressin/oxytocin family. Expressed by the venom gland.

It localises to the secreted. Targets vasopressin-oxytocin related receptors. In Conus monile (Necklace cone), this protein is Conopressin/conophysin, isoform 2.